A 209-amino-acid polypeptide reads, in one-letter code: N-(5'-phosphoribosyl)anthranilate isomerase (209 aa).

Belongs to the TrpF family.

The catalysed reaction is N-(5-phospho-beta-D-ribosyl)anthranilate = 1-(2-carboxyphenylamino)-1-deoxy-D-ribulose 5-phosphate. It participates in amino-acid biosynthesis; L-tryptophan biosynthesis; L-tryptophan from chorismate: step 3/5. This Staphylococcus carnosus (strain TM300) protein is N-(5'-phosphoribosyl)anthranilate isomerase.